Reading from the N-terminus, the 355-residue chain is Protein RecA (355 aa).

67–74 (GPESSGKT) is a binding site for ATP.

Belongs to the RecA family.

The protein resides in the cytoplasm. Its function is as follows. Can catalyze the hydrolysis of ATP in the presence of single-stranded DNA, the ATP-dependent uptake of single-stranded DNA by duplex DNA, and the ATP-dependent hybridization of homologous single-stranded DNAs. It interacts with LexA causing its activation and leading to its autocatalytic cleavage. This Shewanella baltica (strain OS195) protein is Protein RecA.